The chain runs to 510 residues: Histidine ammonia-lyase (510 aa).

A cross-link (5-imidazolinone (Ala-Gly)) is located at residues 143 to 145 (ASG). Serine 144 is subject to 2,3-didehydroalanine (Ser).

It belongs to the PAL/histidase family. Contains an active site 4-methylidene-imidazol-5-one (MIO), which is formed autocatalytically by cyclization and dehydration of residues Ala-Ser-Gly.

It is found in the cytoplasm. It catalyses the reaction L-histidine = trans-urocanate + NH4(+). Its pathway is amino-acid degradation; L-histidine degradation into L-glutamate; N-formimidoyl-L-glutamate from L-histidine: step 1/3. The sequence is that of Histidine ammonia-lyase from Shewanella pealeana (strain ATCC 700345 / ANG-SQ1).